The primary structure comprises 502 residues: Lipoprotein LipO (502 aa).

Positions 1–21 (MKIRMRKKWMALPLAAMMIAG) are cleaved as a signal peptide. Cys-22 carries N-palmitoyl cysteine lipidation. Residue Cys-22 is the site of S-diacylglycerol cysteine attachment.

Its subcellular location is the cell membrane. This chain is Lipoprotein LipO (lipO), found in Bacillus subtilis (strain 168).